Reading from the N-terminus, the 196-residue chain is Peptidyl-tRNA hydrolase (196 aa).

TRNA is bound at residue Tyr17. His22 (proton acceptor) is an active-site residue. Tyr69, Asn71, and Asn117 together coordinate tRNA.

The protein belongs to the PTH family. As to quaternary structure, monomer.

It is found in the cytoplasm. It catalyses the reaction an N-acyl-L-alpha-aminoacyl-tRNA + H2O = an N-acyl-L-amino acid + a tRNA + H(+). Functionally, hydrolyzes ribosome-free peptidyl-tRNAs (with 1 or more amino acids incorporated), which drop off the ribosome during protein synthesis, or as a result of ribosome stalling. Catalyzes the release of premature peptidyl moieties from peptidyl-tRNA molecules trapped in stalled 50S ribosomal subunits, and thus maintains levels of free tRNAs and 50S ribosomes. The polypeptide is Peptidyl-tRNA hydrolase (Pseudarthrobacter chlorophenolicus (strain ATCC 700700 / DSM 12829 / CIP 107037 / JCM 12360 / KCTC 9906 / NCIMB 13794 / A6) (Arthrobacter chlorophenolicus)).